The chain runs to 60 residues: Large ribosomal subunit protein bL32 (60 aa).

Positions 1–21 (MAVPARHTSKAKKNKRRTHYK) are disordered. Positions 7–20 (HTSKAKKNKRRTHY) are enriched in basic residues.

This sequence belongs to the bacterial ribosomal protein bL32 family.

The polypeptide is Large ribosomal subunit protein bL32 (Streptococcus uberis (strain ATCC BAA-854 / 0140J)).